Reading from the N-terminus, the 295-residue chain is Trimeric intracellular cation channel type A (295 aa).

Topologically, residues M1–D11 are lumenal. Residues L12–I32 traverse the membrane as a helical segment. Over S33–P51 the chain is Cytoplasmic. Residues V52 to L72 form a helical membrane-spanning segment. At L73–N84 the chain is on the lumenal side. Ca(2+) is bound at residue G74. The helical transmembrane segment at A85–F105 threads the bilayer. Residues Y106–G144 are Cytoplasmic-facing. A 1,2-diacyl-sn-glycero-3-phospho-(1D-myo-inositol-4,5-bisphosphate)-binding residues include K122 and R126. A helical membrane pass occupies residues W145–L165. Topologically, residues E166 to N178 are lumenal. A helical membrane pass occupies residues E179–L199. The Cytoplasmic segment spans residues Q200–Q201. The helical transmembrane segment at A202–I222 threads the bilayer. Residues C223–H233 are Lumenal-facing. A helical membrane pass occupies residues G234 to G254. Over D255–E295 the chain is Cytoplasmic. A compositionally biased stretch (basic and acidic residues) spans H259–T286. The interval H259–E295 is disordered.

This sequence belongs to the TMEM38 family. As to quaternary structure, homotrimer; conformation seems to be controled by binding to diacylglycerol (DAG).

It localises to the sarcoplasmic reticulum membrane. Its subcellular location is the nucleus membrane. The catalysed reaction is K(+)(in) = K(+)(out). Channel activity is activated by a change of voltage within the sarcoplasmic reticulum lumen and blocked by luminal high Ca(2+) levels. Its function is as follows. Intracellular monovalent cation channel required for maintenance of rapid intracellular calcium release. Acts as a potassium counter-ion channel that functions in synchronization with calcium release from intracellular stores. Opened by a change of voltage within the sarcoplasmic reticulum lumen. In Xenopus tropicalis (Western clawed frog), this protein is Trimeric intracellular cation channel type A (tmem38a).